The chain runs to 416 residues: Probable glucan 1,3-beta-glucosidase A (416 aa).

The N-terminal stretch at 1 to 22 (MFVESAKKALLALSLLAASAQA) is a signal peptide. Asparagine 183 carries N-linked (GlcNAc...) asparagine glycosylation. Glutamate 210 (proton donor) is an active-site residue. Disulfide bonds link cysteine 290-cysteine 415 and cysteine 316-cysteine 342. Glutamate 308 acts as the Nucleophile in catalysis.

This sequence belongs to the glycosyl hydrolase 5 (cellulase A) family. Monomer. Mn(2+) serves as cofactor.

Its subcellular location is the secreted. The enzyme catalyses Successive hydrolysis of beta-D-glucose units from the non-reducing ends of (1-&gt;3)-beta-D-glucans, releasing alpha-glucose.. Beta-glucanases participate in the metabolism of beta-glucan, the main structural component of the cell wall. It could also function biosynthetically as a transglycosylase. This chain is Probable glucan 1,3-beta-glucosidase A (exgA), found in Aspergillus niger (strain ATCC MYA-4892 / CBS 513.88 / FGSC A1513).